Reading from the N-terminus, the 401-residue chain is Dual-specificity RNA methyltransferase RlmN (401 aa).

Glu-114 functions as the Proton acceptor in the catalytic mechanism. The Radical SAM core domain maps to 120–365; sequence DKTRGTLCVS…TMVRRTRGDD (246 aa). An intrachain disulfide couples Cys-127 to Cys-370. 3 residues coordinate [4Fe-4S] cluster: Cys-134, Cys-138, and Cys-141. S-adenosyl-L-methionine-binding positions include 187 to 188, Ser-219, 241 to 243, and Asn-327; these read GE and SLH. The active-site S-methylcysteine intermediate is Cys-370.

The protein belongs to the radical SAM superfamily. RlmN family. [4Fe-4S] cluster is required as a cofactor.

The protein localises to the cytoplasm. The catalysed reaction is adenosine(2503) in 23S rRNA + 2 reduced [2Fe-2S]-[ferredoxin] + 2 S-adenosyl-L-methionine = 2-methyladenosine(2503) in 23S rRNA + 5'-deoxyadenosine + L-methionine + 2 oxidized [2Fe-2S]-[ferredoxin] + S-adenosyl-L-homocysteine. It catalyses the reaction adenosine(37) in tRNA + 2 reduced [2Fe-2S]-[ferredoxin] + 2 S-adenosyl-L-methionine = 2-methyladenosine(37) in tRNA + 5'-deoxyadenosine + L-methionine + 2 oxidized [2Fe-2S]-[ferredoxin] + S-adenosyl-L-homocysteine. Specifically methylates position 2 of adenine 2503 in 23S rRNA and position 2 of adenine 37 in tRNAs. m2A2503 modification seems to play a crucial role in the proofreading step occurring at the peptidyl transferase center and thus would serve to optimize ribosomal fidelity. The chain is Dual-specificity RNA methyltransferase RlmN from Stenotrophomonas maltophilia (strain R551-3).